The primary structure comprises 1044 residues: Carbamoyl phosphate synthase large chain (1044 aa).

The segment at 1–398 (MPKREDISKI…ALMKAIASLD (398 aa)) is carboxyphosphate synthetic domain. Positions 129, 169, 175, 176, 208, 210, 215, 241, 242, 243, 284, and 296 each coordinate ATP. Residues 133 to 325 (HDFLISIGER…IARIAAKIAV (193 aa)) enclose the ATP-grasp 1 domain. 3 residues coordinate Mg(2+): Gln-284, Glu-296, and Asn-298. Residues Gln-284, Glu-296, and Asn-298 each coordinate Mn(2+). The interval 399–539 (IDLSYRLRLY…YSTYEDEDEL (141 aa)) is oligomerization domain. Residues 540–916 (PGISGFVAII…AIRKSILRDI (377 aa)) are carbamoyl phosphate synthetic domain. The region spanning 665-854 (SKRLEAMGID…WVELAVSAIM (190 aa)) is the ATP-grasp 2 domain. Arg-701, Lys-738, Leu-740, Glu-745, Gly-770, Val-771, His-772, Ser-773, Gln-813, and Glu-825 together coordinate ATP. The Mg(2+) site is built by Gln-813, Glu-825, and Asn-827. Mn(2+) is bound by residues Gln-813, Glu-825, and Asn-827. The MGS-like domain maps to 911-1044 (SILRDIKSVF…IDYREISSYH (134 aa)). An allosteric domain region spans residues 916-1044 (IKSVFISVRD…IDYREISSYH (129 aa)).

Belongs to the CarB family. As to quaternary structure, composed of two chains; the small (or glutamine) chain promotes the hydrolysis of glutamine to ammonia, which is used by the large (or ammonia) chain to synthesize carbamoyl phosphate. Tetramer of heterodimers (alpha,beta)4. Mg(2+) is required as a cofactor. Mn(2+) serves as cofactor.

The catalysed reaction is hydrogencarbonate + L-glutamine + 2 ATP + H2O = carbamoyl phosphate + L-glutamate + 2 ADP + phosphate + 2 H(+). It carries out the reaction hydrogencarbonate + NH4(+) + 2 ATP = carbamoyl phosphate + 2 ADP + phosphate + 2 H(+). It functions in the pathway amino-acid biosynthesis; L-arginine biosynthesis; carbamoyl phosphate from bicarbonate: step 1/1. It participates in pyrimidine metabolism; UMP biosynthesis via de novo pathway; (S)-dihydroorotate from bicarbonate: step 1/3. Functionally, large subunit of the glutamine-dependent carbamoyl phosphate synthetase (CPSase). CPSase catalyzes the formation of carbamoyl phosphate from the ammonia moiety of glutamine, carbonate, and phosphate donated by ATP, constituting the first step of 2 biosynthetic pathways, one leading to arginine and/or urea and the other to pyrimidine nucleotides. The large subunit (synthetase) binds the substrates ammonia (free or transferred from glutamine from the small subunit), hydrogencarbonate and ATP and carries out an ATP-coupled ligase reaction, activating hydrogencarbonate by forming carboxy phosphate which reacts with ammonia to form carbamoyl phosphate. The sequence is that of Carbamoyl phosphate synthase large chain from Thermoplasma volcanium (strain ATCC 51530 / DSM 4299 / JCM 9571 / NBRC 15438 / GSS1).